Here is a 346-residue protein sequence, read N- to C-terminus: tRNA N6-adenosine threonylcarbamoyltransferase (346 aa).

A divalent metal cation-binding residues include histidine 120, histidine 124, and tyrosine 141. Substrate is bound by residues 141–145, aspartate 173, glycine 188, glutamate 192, and asparagine 277; that span reads YVSGG. An a divalent metal cation-binding site is contributed by aspartate 305.

Belongs to the KAE1 / TsaD family. Component of the EKC/KEOPS complex composed of at least BUD32, CGI121, GON7, KAE1 and PCC1; the whole complex dimerizes. A divalent metal cation serves as cofactor.

Its subcellular location is the cytoplasm. It is found in the nucleus. It carries out the reaction L-threonylcarbamoyladenylate + adenosine(37) in tRNA = N(6)-L-threonylcarbamoyladenosine(37) in tRNA + AMP + H(+). Its function is as follows. Component of the EKC/KEOPS complex that is required for the formation of a threonylcarbamoyl group on adenosine at position 37 (t(6)A37) in tRNAs that read codons beginning with adenine. The complex is probably involved in the transfer of the threonylcarbamoyl moiety of threonylcarbamoyl-AMP (TC-AMP) to the N6 group of A37. KAE1 likely plays a direct catalytic role in this reaction, but requires other protein(s) of the complex to fulfill this activity. The EKC/KEOPS complex also promotes both telomere uncapping and telomere elongation. The complex is required for efficient recruitment of transcriptional coactivators. The sequence is that of tRNA N6-adenosine threonylcarbamoyltransferase from Gibberella zeae (strain ATCC MYA-4620 / CBS 123657 / FGSC 9075 / NRRL 31084 / PH-1) (Wheat head blight fungus).